Here is a 373-residue protein sequence, read N- to C-terminus: Zn(2)-C6 fungal-type transcription factor afumD (373 aa).

A disordered region spans residues 1 to 48 (MLDRSKMTSAIPDSNSSSSPRGHNQSERDSYNRKKRKGPRLAHRKSRT). The span at 33–48 (RKKRKGPRLAHRKSRT) shows a compositional bias: basic residues. The segment at residues 50 to 77 (CQRCRARRVKCDESRPVCRDCHRHGIPC) is a DNA-binding region (zn(2)-C6 fungal-type). The disordered stretch occupies residues 86-110 (GAIPPSTGIQSRPLEPSPSDPSNDA).

Its subcellular location is the nucleus. In terms of biological role, zn(2)-C6 fungal-type transcription factor; part of the gene cluster that mediates the biosynthesis fumihopaside A, a hopane-type glucoside that enhances the thermotolerance and UV resistance of N.fumigata. The polypeptide is Zn(2)-C6 fungal-type transcription factor afumD (Aspergillus fumigatus (strain CBS 144.89 / FGSC A1163 / CEA10) (Neosartorya fumigata)).